The chain runs to 368 residues: Glutamate 5-kinase (368 aa).

Lysine 15 contributes to the ATP binding site. The substrate site is built by serine 55, aspartate 143, and asparagine 155. ATP-binding positions include 175–176 (SD) and 217–223 (SGGMVSK). In terms of domain architecture, PUA spans 277–354 (EGRLTIDAGA…DAQEAALGYA (78 aa)).

Belongs to the glutamate 5-kinase family.

Its subcellular location is the cytoplasm. It catalyses the reaction L-glutamate + ATP = L-glutamyl 5-phosphate + ADP. Its pathway is amino-acid biosynthesis; L-proline biosynthesis; L-glutamate 5-semialdehyde from L-glutamate: step 1/2. Catalyzes the transfer of a phosphate group to glutamate to form L-glutamate 5-phosphate. The sequence is that of Glutamate 5-kinase from Sphingopyxis alaskensis (strain DSM 13593 / LMG 18877 / RB2256) (Sphingomonas alaskensis).